An 89-amino-acid chain; its full sequence is Small ribosomal subunit protein uS15 (89 aa).

Belongs to the universal ribosomal protein uS15 family. In terms of assembly, part of the 30S ribosomal subunit. Forms a bridge to the 50S subunit in the 70S ribosome, contacting the 23S rRNA.

Its function is as follows. One of the primary rRNA binding proteins, it binds directly to 16S rRNA where it helps nucleate assembly of the platform of the 30S subunit by binding and bridging several RNA helices of the 16S rRNA. Forms an intersubunit bridge (bridge B4) with the 23S rRNA of the 50S subunit in the ribosome. This Halalkalibacterium halodurans (strain ATCC BAA-125 / DSM 18197 / FERM 7344 / JCM 9153 / C-125) (Bacillus halodurans) protein is Small ribosomal subunit protein uS15.